We begin with the raw amino-acid sequence, 502 residues long: UPF0371 protein CTC_00401 (502 aa).

The protein belongs to the UPF0371 family.

This is UPF0371 protein CTC_00401 from Clostridium tetani (strain Massachusetts / E88).